The sequence spans 314 residues: 2,3-dihydroxyphenylpropionate/2,3-dihydroxicinnamic acid 1,2-dioxygenase (314 aa).

The active-site Proton donor is H115. The Proton acceptor role is filled by H179.

The protein belongs to the LigB/MhpB extradiol dioxygenase family. In terms of assembly, homotetramer. Fe(2+) is required as a cofactor.

The enzyme catalyses 3-(2,3-dihydroxyphenyl)propanoate + O2 = (2Z,4E)-2-hydroxy-6-oxonona-2,4-dienedioate + H(+). It catalyses the reaction (2E)-3-(2,3-dihydroxyphenyl)prop-2-enoate + O2 = (2Z,4E,7E)-2-hydroxy-6-oxonona-2,4,7-trienedioate + H(+). The protein operates within aromatic compound metabolism; 3-phenylpropanoate degradation. In terms of biological role, catalyzes the non-heme iron(II)-dependent oxidative cleavage of 2,3-dihydroxyphenylpropionic acid and 2,3-dihydroxicinnamic acid into 2-hydroxy-6-ketononadienedioate and 2-hydroxy-6-ketononatrienedioate, respectively. The polypeptide is 2,3-dihydroxyphenylpropionate/2,3-dihydroxicinnamic acid 1,2-dioxygenase (Escherichia coli O139:H28 (strain E24377A / ETEC)).